Here is a 382-residue protein sequence, read N- to C-terminus: MGIKGLSQVIADHAPSAIKVQEIKAFFGRKVAIDASMCLYQFLIAIRQDGSQMQSEDGETTSHLMGMFYRTIRMIDNGIKPVYVFDGKPPDMKSGELEKRTERRAEAEKALTEAKEKGDAKEAEKFERRLVKVTKQQNEEVKQLLGLMGIPVVEAPCEAEAQCANLVKAGKVYGTATEDMDALTFGSCVLLRHLLAPEAKKIPIKEFHLARVLEEMQLTKDQFIDLCILLGCDYCGTIRGIGPKKAVELIKQHKNIETVLENIDQTKYPPPADWPYKRARELFHEPEVMKCDEVELTWKDPDVEGIVKFMCGEKNFSEDRIRSAMVRMQKSRNAGTQGRIDSFFTVSSQVKCVTVAKRKAQEEAEKMKKGGKKSGPPKKKAK.

The tract at residues 1-104 (MGIKGLSQVI…GELEKRTERR (104 aa)) is N-domain. Residue Asp34 coordinates Mg(2+). The DNA site is built by Arg47 and Arg70. Residues Asp86, Glu158, Glu160, Asp179, and Asp181 each coordinate Mg(2+). The I-domain stretch occupies residues 122-253 (EAEKFERRLV…KKAVELIKQH (132 aa)). Residue Glu158 coordinates DNA. Gly231 and Asp233 together coordinate DNA. Asp233 serves as a coordination point for Mg(2+). Residues 336 to 344 (TQGRIDSFF) form an interaction with PCNA region. Residues 359–368 (KAQEEAEKMK) show a composition bias toward basic and acidic residues. The segment at 359–382 (KAQEEAEKMKKGGKKSGPPKKKAK) is disordered. The segment covering 369-382 (KGGKKSGPPKKKAK) has biased composition (basic residues).

It belongs to the XPG/RAD2 endonuclease family. FEN1 subfamily. Interacts with PCNA. Three molecules of crn-1 bind to one PCNA trimer with each molecule binding to one PCNA monomer. PCNA stimulates the nuclease activity without altering cleavage specificity. The cofactor is Mg(2+). Phosphorylated. Phosphorylation upon DNA damage induces relocalization to the nuclear plasma.

Its subcellular location is the nucleus. It is found in the nucleolus. The protein localises to the nucleoplasm. It localises to the mitochondrion. Functionally, structure-specific nuclease with 5'-flap endonuclease and 5'-3' exonuclease activities involved in DNA replication and repair. During DNA replication, cleaves the 5'-overhanging flap structure that is generated by displacement synthesis when DNA polymerase encounters the 5'-end of a downstream Okazaki fragment. It enters the flap from the 5'-end and then tracks to cleave the flap base, leaving a nick for ligation. Also involved in the long patch base excision repair (LP-BER) pathway, by cleaving within the apurinic/apyrimidinic (AP) site-terminated flap. Acts as a genome stabilization factor that prevents flaps from equilibrating into structures that lead to duplications and deletions. Also possesses 5'-3' exonuclease activity on nicked or gapped double-stranded DNA, and exhibits RNase H activity. Also involved in replication and repair of rDNA and in repairing mitochondrial DNA. This is Flap endonuclease 1 from Caenorhabditis briggsae.